Consider the following 281-residue polypeptide: Homoserine kinase (281 aa).

83–93 (PVSSGLGSSAA) lines the ATP pocket.

Belongs to the GHMP kinase family. Homoserine kinase subfamily.

It is found in the cytoplasm. It carries out the reaction L-homoserine + ATP = O-phospho-L-homoserine + ADP + H(+). The protein operates within amino-acid biosynthesis; L-threonine biosynthesis; L-threonine from L-aspartate: step 4/5. Its function is as follows. Catalyzes the ATP-dependent phosphorylation of L-homoserine to L-homoserine phosphate. The protein is Homoserine kinase of Thermotoga petrophila (strain ATCC BAA-488 / DSM 13995 / JCM 10881 / RKU-1).